Reading from the N-terminus, the 792-residue chain is Alpha-1,6-mannosylglycoprotein 6-beta-N-acetylglucosaminyltransferase B (792 aa).

Over 1–24 (MITVNPDGKIMVRRCLVTLRPFRL) the chain is Cytoplasmic. The helical; Signal-anchor for type II membrane protein transmembrane segment at 25 to 45 (FVLGIGFFTLCFLMTSLGGQF) threads the bilayer. At 46 to 792 (SARRLGDSPF…GQVALCQGCL (747 aa)) the chain is on the lumenal side. An N-linked (GlcNAc...) asparagine glycan is attached at Asn127. 4 disulfide bridges follow: Cys157–Cys195, Cys168–Cys208, Cys184–Cys353, and Cys387–Cys644. N-linked (GlcNAc...) asparagine glycosylation occurs at Asn675. Cystine bridges form between Cys700/Cys775, Cys704/Cys777, Cys711/Cys764, Cys732/Cys753, and Cys788/Cys791.

The protein belongs to the glycosyltransferase 18 family. Mn(2+) serves as cofactor. Present in brain (at protein level). Predominantly expressed in hippocampus, superficial layers of the brain cortex, striatum, nucleus accumbens, a subset of nuclei in the thalamus, inferior colliculus, brain stem and cerebellum.

The protein localises to the golgi apparatus membrane. It carries out the reaction N(4)-{beta-D-GlcNAc-(1-&gt;2)-[beta-D-GlcNAc-(1-&gt;4)]-alpha-D-Man-(1-&gt;3)-[beta-D-GlcNAc-(1-&gt;2)-alpha-D-Man-(1-&gt;6)]-beta-D-Man-(1-&gt;4)-beta-D-GlcNAc-(1-&gt;4)-beta-D-GlcNAc}-L-asparaginyl-[protein] + UDP-N-acetyl-alpha-D-glucosamine = N(4)-{beta-D-GlcNAc-(1-&gt;2)-[beta-D-GlcNAc-(1-&gt;4)]-alpha-D-Man-(1-&gt;3)-[beta-D-GlcNAc-(1-&gt;2)-[beta-D-GlcNAc-(1-&gt;6)]-alpha-D-Man-(1-&gt;6)]-beta-D-Man-(1-&gt;4)-beta-D-GlcNAc-(1-&gt;4)-beta-D-GlcNAc}-L-asparaginyl-[protein] + UDP + H(+). It catalyses the reaction 3-O-[N-acetyl-beta-D-glucosaminyl-(1-&gt;2)-alpha-D-mannosyl]-L-seryl-[protein] + UDP-N-acetyl-alpha-D-glucosamine = O(3)-{N-acetyl-beta-D-glucosaminyl-(1-&gt;2)-[N-acetyl-beta-D-glucosaminyl-(1-&gt;6)]-alpha-D-mannosyl}-L-seryl-[protein] + UDP + H(+). The catalysed reaction is 3-O-[N-acetyl-beta-D-glucosaminyl-(1-&gt;2)-alpha-D-mannosyl]-L-threonyl-[protein] + UDP-N-acetyl-alpha-D-glucosamine = O(3)-{N-acetyl-beta-D-glucosaminyl-(1-&gt;2)-[N-acetyl-beta-D-glucosaminyl-(1-&gt;6)]-alpha-D-mannosyl}-L-threonyl-[protein] + UDP + H(+). It functions in the pathway protein modification; protein glycosylation. In terms of biological role, glycosyltransferase that acts on alpha-linked mannose of N-glycans and O-mannosyl glycans. Catalyzes the transfer of N-acetylglucosamine (GlcNAc) to the beta 1-6 linkage of the mannose residue of GlcNAc-beta1,2-Man-alpha on both the alpha1,3- and alpha1,6-linked mannose arms in the core structure of N-glycan. Also acts on the GlcNAc-beta1,2-Man-alpha1-Ser/Thr moiety, forming a 2,6-branched structure in brain O-mannosyl glycan. Plays an active role in modulating integrin and laminin-dependent adhesion and migration of neuronal cells via its activity in the O-mannosyl glycan pathway. This is Alpha-1,6-mannosylglycoprotein 6-beta-N-acetylglucosaminyltransferase B (Mgat5b) from Mus musculus (Mouse).